Here is a 243-residue protein sequence, read N- to C-terminus: R-spondin-2 (243 aa).

Positions 1-21 (MQFQLFSFALIILNCVDYSHC) are cleaved as a signal peptide. Intrachain disulfides connect Cys40/Cys46, Cys43/Cys52, Cys55/Cys74, Cys78/Cys93, Cys96/Cys104, Cys101/Cys110, Cys113/Cys124, Cys128/Cys141, Cys145/Cys187, Cys156/Cys163, and Cys196/Cys203. An FU repeat occupies 90-134 (MNRCSRCRIENCDSCFSRDFCIKCKSGFYSLKGQCFEECPEGFAP). In terms of domain architecture, TSP type-1 spans 144–204 (GCEVGPWSEW…RCKMAIRHCP (61 aa)). Asn160 is a glycosylation site (N-linked (GlcNAc...) asparagine). Positions 204 to 224 (PGGKRTTKKKDKRNKKKKKKL) are enriched in basic residues. Residues 204 to 243 (PGGKRTTKKKDKRNKKKKKKLLERAQEQHSVVLATDRSSQ) are disordered.

It belongs to the R-spondin family. In terms of assembly, binds heparin.

Its subcellular location is the secreted. Activator of the canonical Wnt signaling pathway by acting as a ligand for lgr4-6 receptors. Upon binding to lgr4-6 (lgr4, lgr5 or lgr6), lgr4-6 associate with phosphorylated lrp6 and frizzled receptors that are activated by extracellular Wnt receptors, triggering the canonical Wnt signaling pathway to increase expression of target genes. Acts both in the canonical Wnt/beta-catenin-dependent pathway and in non-canonical Wnt signaling pathway. Activates neural markers and promotes muscle formation. Overexpression blocks activin, nodal and BMP4 signaling, suggesting that it may negatively regulate the TGF-beta pathway. During embryonic development, plays a crucial role in limb specification, amplifying the Wnt signaling pathway independently of LGR4-6 receptors, possibly by acting as a direct antagonistic ligand to RNF43 and ZNRF3, hence governing the number of limbs an embryo should form. The protein is R-spondin-2 (rspo2) of Xenopus laevis (African clawed frog).